The primary structure comprises 175 residues: Protein GrpE (175 aa).

The tract at residues 1-35 (MSEQKQEIENENAQNSENLQDDLQDNEKNETNELQ) is disordered. Over residues 25 to 35 (DNEKNETNELQ) the composition is skewed to basic and acidic residues.

This sequence belongs to the GrpE family. In terms of assembly, homodimer.

It is found in the cytoplasm. In terms of biological role, participates actively in the response to hyperosmotic and heat shock by preventing the aggregation of stress-denatured proteins, in association with DnaK and GrpE. It is the nucleotide exchange factor for DnaK and may function as a thermosensor. Unfolded proteins bind initially to DnaJ; upon interaction with the DnaJ-bound protein, DnaK hydrolyzes its bound ATP, resulting in the formation of a stable complex. GrpE releases ADP from DnaK; ATP binding to DnaK triggers the release of the substrate protein, thus completing the reaction cycle. Several rounds of ATP-dependent interactions between DnaJ, DnaK and GrpE are required for fully efficient folding. The sequence is that of Protein GrpE from Campylobacter jejuni (strain RM1221).